A 274-amino-acid chain; its full sequence is Thymidylate synthase (274 aa).

A dUMP-binding site is contributed by arginine 21. Histidine 51 contributes to the (6R)-5,10-methylene-5,6,7,8-tetrahydrofolate binding site. 123–124 (RR) is a binding site for dUMP. The Nucleophile role is filled by cysteine 156. DUMP contacts are provided by residues 176–179 (RSAD), asparagine 187, and 217–219 (HIY). Position 179 (aspartate 179) interacts with (6R)-5,10-methylene-5,6,7,8-tetrahydrofolate. Serine 273 provides a ligand contact to (6R)-5,10-methylene-5,6,7,8-tetrahydrofolate.

This sequence belongs to the thymidylate synthase family. Bacterial-type ThyA subfamily. Homodimer.

It is found in the cytoplasm. The enzyme catalyses dUMP + (6R)-5,10-methylene-5,6,7,8-tetrahydrofolate = 7,8-dihydrofolate + dTMP. Its pathway is pyrimidine metabolism; dTTP biosynthesis. In terms of biological role, catalyzes the reductive methylation of 2'-deoxyuridine-5'-monophosphate (dUMP) to 2'-deoxythymidine-5'-monophosphate (dTMP) while utilizing 5,10-methylenetetrahydrofolate (mTHF) as the methyl donor and reductant in the reaction, yielding dihydrofolate (DHF) as a by-product. This enzymatic reaction provides an intracellular de novo source of dTMP, an essential precursor for DNA biosynthesis. The protein is Thymidylate synthase of Francisella tularensis subsp. novicida (strain U112).